Reading from the N-terminus, the 338-residue chain is Large ribosomal subunit protein uL10 (338 aa).

The tract at residues 298–338 (TVQQSQSQQPAAEEKKEEKKEEEKKGPSEEEIASGLASLFG) is disordered. Residues 309–325 (AEEKKEEKKEEEKKGPS) are compositionally biased toward basic and acidic residues.

The protein belongs to the universal ribosomal protein uL10 family. In terms of assembly, part of the 50S ribosomal subunit. Forms part of the ribosomal stalk which helps the ribosome interact with GTP-bound translation factors. Forms a heptameric L10(L12)2(L12)2(L12)2 complex, where L10 forms an elongated spine to which the L12 dimers bind in a sequential fashion.

Its function is as follows. Forms part of the ribosomal stalk, playing a central role in the interaction of the ribosome with GTP-bound translation factors. This chain is Large ribosomal subunit protein uL10, found in Saccharolobus solfataricus (strain ATCC 35092 / DSM 1617 / JCM 11322 / P2) (Sulfolobus solfataricus).